A 44-amino-acid chain; its full sequence is Cytochrome b559 subunit beta (44 aa).

A helical transmembrane segment spans residues 19 to 35 (WLAVHTLAVPTVFFVGA). Heme is bound at residue histidine 23.

It belongs to the PsbE/PsbF family. Heterodimer of an alpha subunit and a beta subunit. PSII is composed of 1 copy each of membrane proteins PsbA, PsbB, PsbC, PsbD, PsbE, PsbF, PsbH, PsbI, PsbJ, PsbK, PsbL, PsbM, PsbT, PsbX, PsbY, PsbZ, Psb30/Ycf12, peripheral proteins PsbO, CyanoQ (PsbQ), PsbU, PsbV and a large number of cofactors. It forms dimeric complexes. Requires heme b as cofactor.

The protein resides in the cellular thylakoid membrane. Functionally, this b-type cytochrome is tightly associated with the reaction center of photosystem II (PSII). PSII is a light-driven water:plastoquinone oxidoreductase that uses light energy to abstract electrons from H(2)O, generating O(2) and a proton gradient subsequently used for ATP formation. It consists of a core antenna complex that captures photons, and an electron transfer chain that converts photonic excitation into a charge separation. The sequence is that of Cytochrome b559 subunit beta from Crocosphaera subtropica (strain ATCC 51142 / BH68) (Cyanothece sp. (strain ATCC 51142)).